Consider the following 857-residue polypeptide: Zinc finger protein 574 (857 aa).

C2H2-type zinc fingers lie at residues 15–37, 58–80, 99–121, 206–228, 297–319, 324–346, 352–374, 380–401, 428–451, 457–479, 485–507, 513–535, 541–563, and 569–591; these read YVCS…QQSH, YQCL…QELH, YECP…RYTH, YKCS…QGTH, FSCG…QISH, FSCP…LKSH, YLCV…RRSH, FTCE…RRVH, FHCD…RFVH, HKCP…MLTH, YSCT…RLTH, YKCQ…QYVH, YKCN…QYHH, and YKCQ…QLGH. The C2H2-type 15; degenerate zinc-finger motif lies at 597-619; the sequence is HRCRECGTNFPSVQRLQDHRCSK. 5 C2H2-type zinc fingers span residues 628–651, 681–703, 709–731, 737–759, and 765–787; these read LECP…AAQH, LECS…RRIH, YPCP…RRLH, FKCD…KRIH, and HSCP…RKLH. The interval 648–678 is disordered; that stretch reads AAQHSGNKRSNVSSGKGTPVLPRNKLKGGGG. The span at 651 to 663 shows a compositional bias: polar residues; it reads HSGNKRSNVSSGK.

This sequence belongs to the krueppel C2H2-type zinc-finger protein family.

The protein resides in the nucleus. In terms of biological role, may be involved in transcriptional regulation. The chain is Zinc finger protein 574 (znf574) from Xenopus tropicalis (Western clawed frog).